Consider the following 282-residue polypeptide: Pantothenate synthetase (282 aa).

32–39 (MGALHEGH) contributes to the ATP binding site. The active-site Proton donor is the histidine 39. Glutamine 63 contacts (R)-pantoate. Glutamine 63 is a beta-alanine binding site. 149-152 (GEKD) provides a ligand contact to ATP. Residue glutamine 155 participates in (R)-pantoate binding. Residues valine 178 and 186-189 (LSSR) each bind ATP.

The protein belongs to the pantothenate synthetase family. As to quaternary structure, homodimer.

Its subcellular location is the cytoplasm. It carries out the reaction (R)-pantoate + beta-alanine + ATP = (R)-pantothenate + AMP + diphosphate + H(+). Its pathway is cofactor biosynthesis; (R)-pantothenate biosynthesis; (R)-pantothenate from (R)-pantoate and beta-alanine: step 1/1. Catalyzes the condensation of pantoate with beta-alanine in an ATP-dependent reaction via a pantoyl-adenylate intermediate. This is Pantothenate synthetase from Paracoccus denitrificans (strain Pd 1222).